Consider the following 2627-residue polypeptide: Telomerase protein component 1 (2627 aa).

TEP1 N-terminal repeat units lie at residues 1–30 (MEKLHGHVSAHPDILSLENRCLAMLPDLQP), 31–60 (LEKLHQHVSTHSDILSLKNQCLATLPDLKT), 61–90 (MEKPHGYVSAHPDILSLENQCLATLSDLKT), and 91–120 (MEKPHGHVSAHPDILSLENRCLATLSSLKS). Disordered stretches follow at residues 193-214 (FDSEEKKGAETQMPSYSLSLGE) and 383-402 (RKHRAKRHPRRPPRSPGMEP). In terms of domain architecture, TROVE spans 223–676 (VKLTSGDSES…VKHSLPLLPG (454 aa)). Basic residues predominate over residues 383-395 (RKHRAKRHPRRPP). Positions 1162–1490 (RLSLVTGQSG…PLERPGARLC (329 aa)) constitute an NACHT domain. 1168–1175 (GQSGQGKT) lines the ATP pocket. WD repeat units follow at residues 1411-1448 (VLPQALTALEVTRSGLTVDQLHGVLSVWRTLPKGTKSW), 1674-1713 (AVSSSPTAVAFSTNGQRAAVGTANGTVYLLDLRTWQEEKS), 1716-1754 (SGCDGISACLFLSDDTLFLTAFDGLLELWDLQHGCRVLQ), 1757-1796 (AHQYQITGCCLSPDCRLLATVCLGGCLKLWDTVRGQLAFQ), 1798-1837 (TYPKSLNCVAFHPEGQVIATGSWAGSISFFQVDGLKVTKD), 1840-1879 (APGASIRTLAFNVPGGVVAVGRLDSMVELWAWREGARLAA), 1882-1921 (AHHGFVAAALFLHAGCQLLTAGEDGKVQVWSGSLGRPRGH), 1925-1964 (LSLSPALSVALSPDGDRVAVGYRADGIRIYKISSGSQGAQ), 1967-2005 (ALDVAVSALAWLSPKVLVSGAEDGSLQGWALKECSLQSL), 2008-2047 (LSRFQKPVLGLATSQELLASASEDFTVQLWPRQLLTRPHK), 2059-2098 (GHEGPVSCCSFSTDGGSLATGGRDRSLLCWDVRTPKTPVL), 2105-2143 (CHRDWVTGCAWTKDNLLISCSSDGSVGLWDPESGQRLGQ), 2146-2183 (GHQSAVSAVAAVEEHVVSVSRDGTLKVWDHQGVELTSI), 2185-2233 (AHSG…QTHT), 2236-2275 (GHSGPVRAAAVSETSGLMLTASEDGSVRLWQVPKEADDTC), 2278-2317 (RSSAAVTAVAWAPDGSMAVSGNQAGELILWQEAKAVATAQ), 2319-2355 (PGHIGALIWSSAHTFFVLSADEKISEWQVKLRKGSAP), 2368-2417 (EDLG…PMIL), and 2459-2500 (NPSR…GEWT). Over residues 2506 to 2522 (QKKANTPETQTPGTDPS) the composition is skewed to polar residues. The tract at residues 2506-2551 (QKKANTPETQTPGTDPSTCRESDASMDSDASMDSEPTPHLKTRQRR) is disordered. WD repeat units follow at residues 2553–2590 (IHSGSVTALHVLPELLVTASKDRDVKLWERPSMQLLGL) and 2592–2626 (RCEGSVSCLEPWLGANSTLQLAVGDVQGNVYFLNW).

Associated component of the telomerase holoenzyme complex. Component of the vault ribonucleoprotein particle, at least composed of MVP, PARP4 and one or more vault RNAs (vRNAs). Binds to VAULTRC1, VAULTRC2 and VAULTRC4/hvg4 vRNAs. Ubiquitous.

It is found in the nucleus. Its subcellular location is the chromosome. It localises to the telomere. Component of the telomerase ribonucleoprotein complex that is essential for the replication of chromosome termini. Also a component of the ribonucleoprotein vaults particle, a multi-subunit structure involved in nucleo-cytoplasmic transport. Responsible for the localizing and stabilizing vault RNA (vRNA) association in the vault ribonucleoprotein particle. Binds to TERC. The polypeptide is Telomerase protein component 1 (TEP1) (Homo sapiens (Human)).